The following is a 353-amino-acid chain: Uroporphyrinogen decarboxylase (353 aa).

Residues 27–31 (RQAGR), phenylalanine 46, aspartate 76, tyrosine 152, serine 207, and histidine 321 each bind substrate.

This sequence belongs to the uroporphyrinogen decarboxylase family. Homodimer.

Its subcellular location is the cytoplasm. The catalysed reaction is uroporphyrinogen III + 4 H(+) = coproporphyrinogen III + 4 CO2. It participates in porphyrin-containing compound metabolism; protoporphyrin-IX biosynthesis; coproporphyrinogen-III from 5-aminolevulinate: step 4/4. In terms of biological role, catalyzes the decarboxylation of four acetate groups of uroporphyrinogen-III to yield coproporphyrinogen-III. The chain is Uroporphyrinogen decarboxylase from Listeria monocytogenes serotype 4b (strain F2365).